The chain runs to 86 residues: MANIKSQKKRVRTNEKAHQRNVAVKSALKTYIRRTREAIASGDKAAAEAAFAIAGRKLDQAAGKGVIAKNQAANRKSSLALQINAM.

Residues 1–11 (MANIKSQKKRV) show a composition bias toward basic residues. Residues 1–20 (MANIKSQKKRVRTNEKAHQR) are disordered.

It belongs to the bacterial ribosomal protein bS20 family.

In terms of biological role, binds directly to 16S ribosomal RNA. The polypeptide is Small ribosomal subunit protein bS20 (Bifidobacterium animalis subsp. lactis (strain AD011)).